A 263-amino-acid chain; its full sequence is Glutamate racemase (263 aa).

Residues 10–11 (DS) and 42–43 (YG) contribute to the substrate site. Cysteine 73 (proton donor/acceptor) is an active-site residue. Residue 74–75 (NS) participates in substrate binding. The Proton donor/acceptor role is filled by cysteine 183. Substrate is bound at residue 184–185 (TH).

Belongs to the aspartate/glutamate racemases family.

The enzyme catalyses L-glutamate = D-glutamate. The protein operates within cell wall biogenesis; peptidoglycan biosynthesis. Its function is as follows. Provides the (R)-glutamate required for cell wall biosynthesis. In Acidothermus cellulolyticus (strain ATCC 43068 / DSM 8971 / 11B), this protein is Glutamate racemase.